The chain runs to 178 residues: Probable apo-citrate lyase phosphoribosyl-dephospho-CoA transferase (178 aa).

It belongs to the CitX family.

The enzyme catalyses apo-[citrate lyase ACP] + 2'-(5''-triphospho-alpha-D-ribosyl)-3'-dephospho-CoA = holo-[citrate lyase ACP] + diphosphate. Transfers 2-(5''-triphosphoribosyl)-3'-dephosphocoenzyme-A on a serine residue to the apo-acyl carrier protein (gamma chain) of the citrate lyase to yield holo-acyl carrier protein. The sequence is that of Probable apo-citrate lyase phosphoribosyl-dephospho-CoA transferase from Vibrio cholerae serotype O1 (strain ATCC 39541 / Classical Ogawa 395 / O395).